We begin with the raw amino-acid sequence, 532 residues long: Cytokinin dehydrogenase 8 (532 aa).

A signal peptide spans Met1–Ser26. Residues Val51–Ala238 enclose the FAD-binding PCMH-type domain. The FAD site is built by Ala87, Gly89, and Gly91. The residue at position 92 (His92) is a Pros-8alpha-FAD histidine. FAD is bound by residues Ser93, Gln97, Asp162, Thr167, Ser173, Ile177, and Ile228. Asn420 carries N-linked (GlcNAc...) asparagine glycosylation. FAD is bound by residues Tyr482 and Gln520.

The protein belongs to the oxygen-dependent FAD-linked oxidoreductase family. As to quaternary structure, monomer. The cofactor is FAD.

The protein localises to the secreted. It is found in the extracellular space. The enzyme catalyses N(6)-dimethylallyladenine + A + H2O = 3-methyl-2-butenal + adenine + AH2. Catalyzes the oxidation of cytokinins, a family of N(6)-substituted adenine derivatives that are plant hormones, where the substituent is an isopentenyl group. This Oryza sativa subsp. indica (Rice) protein is Cytokinin dehydrogenase 8 (CKX8).